The sequence spans 694 residues: Frizzled-8 (694 aa).

Positions 1-27 (MEWGYLLEVTSLLAALALLQRSSGAAA) are cleaved as a signal peptide. Residues 28–275 (ASAKELACQE…NPFFSQDERA (248 aa)) are Extracellular-facing. Residues 30–151 (AKELACQEIT…GNPDTLCMDY (122 aa)) enclose the FZ domain. Intrachain disulfides connect cysteine 35–cysteine 96, cysteine 43–cysteine 89, cysteine 80–cysteine 118, cysteine 107–cysteine 148, and cysteine 111–cysteine 135. Asparagine 49 carries N-linked (GlcNAc...) asparagine glycosylation. Position 71 to 78 (71 to 78 (QFWPLVEI)) interacts with hexadecanoate. Positions 95-100 (ICLEDY) are wnt-binding. Residues 147-152 (LCMDYN) are wnt-binding. Asparagine 152 is a glycosylation site (N-linked (GlcNAc...) asparagine). Residues 155–226 (DLTTAAPSPP…KARPPGGGAA (72 aa)) are disordered. Over residues 161 to 175 (PSPPRRLPPPPPGEQ) the composition is skewed to pro residues. Residues 176–186 (PPSGSGHGRPP) show a composition bias toward low complexity. Residues 210-225 (RGGGGGGKARPPGGGA) show a composition bias toward gly residues. The chain crosses the membrane as a helical span at residues 276–296 (FTVFWIGLWSVLCFVSTFATV). Over 297-312 (STFLIDMERFKYPERP) the chain is Cytoplasmic. A helical membrane pass occupies residues 313-333 (IIFLSACYLFVSVGYLVRLVA). The Extracellular segment spans residues 334-396 (GHEKVACSGG…RYETTGPALC (63 aa)). The helical transmembrane segment at 397–417 (TVVFLLVYFFGMASSIWWVIL) threads the bilayer. At 418–439 (SLTWFLAAGMKWGNEAIAGYSQ) the chain is on the cytoplasmic side. Residues 440–460 (YFHLAAWLVPSVKSIAVLALS) form a helical membrane-spanning segment. Topologically, residues 461 to 483 (SVDGDPVAGICYVGNQSLDNLRG) are extracellular. A glycan (N-linked (GlcNAc...) asparagine) is linked at asparagine 475. The helical transmembrane segment at 484-504 (FVLAPLVIYLFIGTMFLLAGF) threads the bilayer. The Cytoplasmic segment spans residues 505 to 532 (VSLFRIRSVIKQQDGPTKTHKLEKLMIR). A helical membrane pass occupies residues 533–553 (LGLFTVLYTVPAAVVVACLFY). Over 554–584 (EQHNRPRWEATHNCPCLRDLQPDQARRPDYA) the chain is Extracellular. Residues 585–605 (VFMLKYFMCLVVGITSGVWVW) traverse the membrane as a helical segment. At 606–694 (SGKTLESWRS…YPKQMPLSQV (89 aa)) the chain is on the cytoplasmic side. The Lys-Thr-X-X-X-Trp motif, mediates interaction with the PDZ domain of Dvl family members motif lies at 608–613 (KTLESW). Residues 648 to 664 (GGGGPGGGGGPGGGGGS) are compositionally biased toward gly residues. The tract at residues 648-668 (GGGGPGGGGGPGGGGGSLYSD) is disordered. Residues 692-694 (SQV) carry the PDZ-binding motif.

It belongs to the G-protein coupled receptor Fz/Smo family. In terms of assembly, component of a Wnt-signaling complex that contains a WNT protein, a FZD protein and LRP5 or LRP6. Interacts directly with LRP5 or LRP6; the interaction is promoted by Wnt-binding and signaling and inhibited by DKK1. Interacts with GPOC, RSPO1 and RSPO3. Interacts with glypican GPC3. Ubiquitinated by ZNRF3, leading to its degradation by the proteasome. Most abundant in fetal kidney, followed by brain and lung. In adult tissues, expressed in kidney, heart, pancreas and skeletal muscle.

It is found in the membrane. Its subcellular location is the golgi apparatus. The protein localises to the cell membrane. Its function is as follows. Receptor for Wnt proteins. Component of the Wnt-Fzd-LRP5-LRP6 complex that triggers beta-catenin signaling through inducing aggregation of receptor-ligand complexes into ribosome-sized signalosomes. The beta-catenin canonical signaling pathway leads to the activation of disheveled proteins, inhibition of GSK-3 kinase, nuclear accumulation of beta-catenin and activation of Wnt target genes. A second signaling pathway involving PKC and calcium fluxes has been seen for some family members, but it is not yet clear if it represents a distinct pathway or if it can be integrated in the canonical pathway, as PKC seems to be required for Wnt-mediated inactivation of GSK-3 kinase. Both pathways seem to involve interactions with G-proteins. May be involved in transduction and intercellular transmission of polarity information during tissue morphogenesis and/or in differentiated tissues. Coreceptor along with RYK of Wnt proteins, such as WNT1. The sequence is that of Frizzled-8 (FZD8) from Homo sapiens (Human).